The sequence spans 120 residues: MFSLPGYEYFLGFLIIAAAVPILALVTNLIVAPKGRTGERKLTYESGMEPIGGAWIQFNIRYYMFALVFVIFDVETVFLYPWAVAFNRLGLLAFIEALIFIAILVIALAYAWRKGALEWS.

3 helical membrane-spanning segments follow: residues 10-30 (FLGF…TNLI), 64-84 (MFAL…PWAV), and 89-109 (LGLL…IALA).

It belongs to the complex I subunit 3 family. As to quaternary structure, NDH-1 can be composed of about 15 different subunits; different subcomplexes with different compositions have been identified which probably have different functions.

The protein resides in the cellular thylakoid membrane. It carries out the reaction a plastoquinone + NADH + (n+1) H(+)(in) = a plastoquinol + NAD(+) + n H(+)(out). The enzyme catalyses a plastoquinone + NADPH + (n+1) H(+)(in) = a plastoquinol + NADP(+) + n H(+)(out). Functionally, NDH-1 shuttles electrons from an unknown electron donor, via FMN and iron-sulfur (Fe-S) centers, to quinones in the respiratory and/or the photosynthetic chain. The immediate electron acceptor for the enzyme in this species is believed to be plastoquinone. Couples the redox reaction to proton translocation, and thus conserves the redox energy in a proton gradient. Cyanobacterial NDH-1 also plays a role in inorganic carbon-concentration. This is NAD(P)H-quinone oxidoreductase subunit 3 from Prochlorococcus marinus (strain MIT 9515).